We begin with the raw amino-acid sequence, 682 residues long: DNA-directed RNA polymerase subunit beta' (682 aa).

Zn(2+) contacts are provided by Cys69, Cys71, Cys87, and Cys90. 3 residues coordinate Mg(2+): Asp489, Asp491, and Asp493.

It belongs to the RNA polymerase beta' chain family. RpoC1 subfamily. In plastids the minimal PEP RNA polymerase catalytic core is composed of four subunits: alpha, beta, beta', and beta''. When a (nuclear-encoded) sigma factor is associated with the core the holoenzyme is formed, which can initiate transcription. Mg(2+) serves as cofactor. Zn(2+) is required as a cofactor.

It localises to the plastid. The protein resides in the chloroplast. It catalyses the reaction RNA(n) + a ribonucleoside 5'-triphosphate = RNA(n+1) + diphosphate. DNA-dependent RNA polymerase catalyzes the transcription of DNA into RNA using the four ribonucleoside triphosphates as substrates. The polypeptide is DNA-directed RNA polymerase subunit beta' (Oryza nivara (Indian wild rice)).